Reading from the N-terminus, the 98-residue chain is NADH-ubiquinone oxidoreductase chain 4L (98 aa).

The next 3 membrane-spanning stretches (helical) occupy residues 1 to 21 (MSLT…GLLM), 30 to 50 (LLCL…TILI), and 61 to 81 (IILL…LVAV).

This sequence belongs to the complex I subunit 4L family. In terms of assembly, core subunit of respiratory chain NADH dehydrogenase (Complex I) which is composed of 45 different subunits.

It is found in the mitochondrion inner membrane. It catalyses the reaction a ubiquinone + NADH + 5 H(+)(in) = a ubiquinol + NAD(+) + 4 H(+)(out). Its function is as follows. Core subunit of the mitochondrial membrane respiratory chain NADH dehydrogenase (Complex I) which catalyzes electron transfer from NADH through the respiratory chain, using ubiquinone as an electron acceptor. Part of the enzyme membrane arm which is embedded in the lipid bilayer and involved in proton translocation. The chain is NADH-ubiquinone oxidoreductase chain 4L (MT-ND4L) from Pipistrellus abramus (Japanese pipistrelle).